The primary structure comprises 279 residues: Shikimate dehydrogenase (NADP(+)) (279 aa).

Shikimate contacts are provided by residues 17–19 (SLS) and Thr-64. Lys-68 serves as the catalytic Proton acceptor. Asp-80 contributes to the NADP(+) binding site. The shikimate site is built by Asn-89 and Asp-105. NADP(+)-binding positions include 129-133 (GAGGS), 153-158 (NRTAKK), and Leu-221. Tyr-223 serves as a coordination point for shikimate. Gly-245 provides a ligand contact to NADP(+).

This sequence belongs to the shikimate dehydrogenase family. As to quaternary structure, homodimer.

The enzyme catalyses shikimate + NADP(+) = 3-dehydroshikimate + NADPH + H(+). Its pathway is metabolic intermediate biosynthesis; chorismate biosynthesis; chorismate from D-erythrose 4-phosphate and phosphoenolpyruvate: step 4/7. In terms of biological role, involved in the biosynthesis of the chorismate, which leads to the biosynthesis of aromatic amino acids. Catalyzes the reversible NADPH linked reduction of 3-dehydroshikimate (DHSA) to yield shikimate (SA). This chain is Shikimate dehydrogenase (NADP(+)), found in Idiomarina loihiensis (strain ATCC BAA-735 / DSM 15497 / L2-TR).